Here is a 222-residue protein sequence, read N- to C-terminus: Charged multivesicular body protein 2a (222 aa).

Met-1 is subject to N-acetylmethionine. A coiled-coil region spans residues 12-53 (EELLRQNQRALNRAMRELDRERQKLETQEKKIIADIKKMAKQ). The interval 56-222 (MDAVRIMAKD…EERLKNLRRD (167 aa)) is interaction with VPS4B. Residue Ser-184 is modified to Phosphoserine. Thr-185 carries the post-translational modification Phosphothreonine. Ser-188, Ser-190, and Ser-203 each carry phosphoserine. A coiled-coil region spans residues 195–222 (GKKAEAAASALADADADLEERLKNLRRD). Positions 210 to 220 (ADLEERLKNLR) match the MIT-interacting motif motif. Residues 217–222 (KNLRRD) form an interaction with VTA1 region.

This sequence belongs to the SNF7 family. As to quaternary structure, probable core component of the endosomal sorting required for transport complex III (ESCRT-III). ESCRT-III components are thought to multimerize to form a flat lattice on the perimeter membrane of the endosome. Several assembly forms of ESCRT-III may exist that interact and act sequentially. In vitro, heteromerizes with CHMP3 (but not CHMP4) to form helical tubular structures that expose membrane-interacting sites on the outside whereas VPS4B can associate on the inside of the tubule. Interacts with CHMP1B, CHMP2B, CHMP3, CHMP4A, CHMP4B, CHMP4C and CHMP5. Interacts with VPS4A; the interaction is direct. Interacts with VPS4B; the interaction is direct. Interacts with MITD1. Interacts with VTA1; the interaction probably involves the open conformation of CHMP2A. In terms of processing, ISGylated in a CHMP5-dependent manner. Isgylation weakens and inhibits its interactions with VPS4A and VTA1 respectively.

It is found in the late endosome membrane. The protein localises to the nucleus envelope. Probable core component of the endosomal sorting required for transport complex III (ESCRT-III) which is involved in multivesicular bodies (MVBs) formation and sorting of endosomal cargo proteins into MVBs. MVBs contain intraluminal vesicles (ILVs) that are generated by invagination and scission from the limiting membrane of the endosome and mostly are delivered to lysosomes enabling degradation of membrane proteins, such as stimulated growth factor receptors, lysosomal enzymes and lipids. The MVB pathway appears to require the sequential function of ESCRT-O, -I,-II and -III complexes. ESCRT-III proteins mostly dissociate from the invaginating membrane before the ILV is released. The ESCRT machinery also functions in topologically equivalent membrane fission events, such as the terminal stages of cytokinesis. Together with SPAST, the ESCRT-III complex promotes nuclear envelope sealing and mitotic spindle disassembly during late anaphase. Recruited to the reforming nuclear envelope (NE) during anaphase by LEMD2. ESCRT-III proteins are believed to mediate the necessary vesicle extrusion and/or membrane fission activities, possibly in conjunction with the AAA ATPase VPS4. Its function is as follows. (Microbial infection) The ESCRT machinery functions in topologically equivalent membrane fission events, such as the budding of enveloped viruses (HIV-1 and other lentiviruses). Involved in HIV-1 p6- and p9-dependent virus release. The sequence is that of Charged multivesicular body protein 2a (CHMP2A) from Homo sapiens (Human).